Reading from the N-terminus, the 169-residue chain is Small proline-rich protein 3 (169 aa).

Low complexity predominate over residues 1–24 (MSSYQQKQTFTPPPQLQQQQVKQP). The tract at residues 1–57 (MSSYQQKQTFTPPPQLQQQQVKQPSQPPPQEIFVPTTKEPCHSKVPQPGNTKIPEPG) is disordered. Serine 2 is modified (N-acetylserine). A run of 14 repeats spans residues 43 to 50 (SKVPQPGN), 51 to 58 (TKIPEPGC), 59 to 66 (TKVPEPGC), 67 to 74 (TKVPEPGC), 75 to 82 (TKVPEPGC), 83 to 90 (TKVPEPGC), 91 to 98 (TKVPEPGC), 99 to 106 (TKVPEPGY), 107 to 114 (TKVPEPGS), 115 to 122 (IKVPDQGF), 123 to 130 (IKFPEPGA), 131 to 138 (IKVPEQGY), 139 to 146 (TKVPVPGY), and 147 to 154 (TKLPEPCP). Residues 43-154 (SKVPQPGNTK…GYTKLPEPCP (112 aa)) form a 14 X 8 AA approximate tandem repeats region. Residues 150–169 (PEPCPSTVTPGPAQQKTKQK) form a disordered region. Residues 155–169 (STVTPGPAQQKTKQK) are compositionally biased toward polar residues.

It is found in the cytoplasm. Cross-linked envelope protein of keratinocytes. The sequence is that of Small proline-rich protein 3 (SPRR3) from Homo sapiens (Human).